Consider the following 57-residue polypeptide: Putative secreted protein MT0250 (57 aa).

The signal sequence occupies residues 1–32 (MNRIVAPAAASVVVGLLLGAAAIFGVTLMVQQ). Positions 34–57 (KKPPLPGGDPSSSVLNRVEYGNRS) are disordered.

This is Putative secreted protein MT0250 from Mycobacterium tuberculosis (strain CDC 1551 / Oshkosh).